Here is an 869-residue protein sequence, read N- to C-terminus: Bifunctional uridylyltransferase/uridylyl-removing enzyme (869 aa).

Positions 1–332 (MTDTPAERPD…QFDGEATPEP (332 aa)) are uridylyltransferase. Positions 333–691 (LGGGFSLRRG…RRAVPDNDAL (359 aa)) are uridylyl-removing. Residues 450 to 572 (VDQHTLMVLR…VGTRERLDYL (123 aa)) form the HD domain. 2 ACT domains span residues 692-774 (EVFV…RAVP) and 798-869 (RISL…LDPV).

The protein belongs to the GlnD family. Mg(2+) is required as a cofactor.

The enzyme catalyses [protein-PII]-L-tyrosine + UTP = [protein-PII]-uridylyl-L-tyrosine + diphosphate. It carries out the reaction [protein-PII]-uridylyl-L-tyrosine + H2O = [protein-PII]-L-tyrosine + UMP + H(+). With respect to regulation, uridylyltransferase (UTase) activity is inhibited by glutamine, while glutamine activates uridylyl-removing (UR) activity. Modifies, by uridylylation and deuridylylation, the PII regulatory proteins (GlnB and homologs), in response to the nitrogen status of the cell that GlnD senses through the glutamine level. Under low glutamine levels, catalyzes the conversion of the PII proteins and UTP to PII-UMP and PPi, while under higher glutamine levels, GlnD hydrolyzes PII-UMP to PII and UMP (deuridylylation). Thus, controls uridylylation state and activity of the PII proteins, and plays an important role in the regulation of nitrogen assimilation and metabolism. This chain is Bifunctional uridylyltransferase/uridylyl-removing enzyme, found in Xanthomonas euvesicatoria pv. vesicatoria (strain 85-10) (Xanthomonas campestris pv. vesicatoria).